Consider the following 205-residue polypeptide: Thymidine kinase (205 aa).

ATP-binding positions include 9 to 16 (SAMNAGKT) and 88 to 91 (DECH). Glu89 acts as the Proton acceptor in catalysis. Cys146, Cys148, Cys183, and His186 together coordinate Zn(2+).

The protein belongs to the thymidine kinase family. As to quaternary structure, homotetramer.

It localises to the cytoplasm. The catalysed reaction is thymidine + ATP = dTMP + ADP + H(+). The protein is Thymidine kinase of Blochmanniella pennsylvanica (strain BPEN).